Here is a 1010-residue protein sequence, read N- to C-terminus: Outer kinetochore KNL1 complex subunit knl-1 (1010 aa).

9 repeat units span residues 85–88 (MDIS), 109–112 (MDMS), 228–231 (MDTS), 255–258 (MDIT), 278–281 (MDIS), 323–326 (MDIT), 346–349 (MDIS), 402–405 (MDIT), and 428–431 (MDIS). The tract at residues 85-431 (MDISESPACT…LQKEDLMDIS (347 aa)) is 9 X 4 AA repeats of M-[D/E]-[I/L/M]-[S/T]. Coiled-coil stretches lie at residues 820 to 915 (RIVE…GLDK) and 956 to 988 (KALR…KFAQ).

As to quaternary structure, component of the KNL1 complex composed of knl-1 and kbp-5. Part of the ten-subunit outer kinetochore KMN network that includes the KNL1, MIS12 and NDC80 complexes. Interacts with the protein phosphatase 1 (PP1) catalytic subunit gsp-1; the interaction is direct. Interacts with the protein phosphatase 1 (PP1) catalytic subunit gsp-2; the interaction is direct. Interacts with the MIS12 complex subunits kbp-1, kbp-2 and mis-12. Interacts with the NDC80 complex components ndc-80 and him-10. Interacts with knl-3. Interacts with kbp-3. Interacts with kbp-4. Interacts with kbp-5.

It localises to the cytoplasm. The protein resides in the cell cortex. The protein localises to the chromosome. It is found in the centromere. Its subcellular location is the kinetochore. Functionally, acts as a component of the outer kinetochore KNL1 complex that serves as a docking point for spindle assembly checkpoint components and mediates microtubule-kinetochore interactions. Kinetochores, consisting of a centromere-associated inner segment and a microtubule-contacting outer segment, play a crucial role in chromosome segregation by mediating the physical connection between centromeric DNA and spindle microtubules. The outer kinetochore is made up of the ten-subunit KMN network, comprising the MIS12, NDC80 and KNL1 complexes, and auxiliary microtubule-associated components; together they connect the outer kinetochore with the inner kinetochore, bind microtubules, and mediate interactions with mitotic checkpoint proteins that delay anaphase until chromosomes are bioriented on the spindle. Binds the protein phosphatase 1 catalytic subunits gsp-1 and gsp-2, which has a role in delaying formation of load-bearing kinetochore-microtubule attachments. Required for the recruitment of spindle-assembly checkpoint components bub-1 and mdf-1/2 to unattached kinetochores. Binds microtubules which plays a role in silencing of the spindle assembly checkpoint, but not the formation of load-bearing microtubule-kinetochore attachments. Has a role in the correct localization of the spindly-like protein spdl-1 and the RZZ complex that is composed of rod-1, czw-1 and zwl-1 to kinetochores. In Caenorhabditis elegans, this protein is Outer kinetochore KNL1 complex subunit knl-1 (knl-1).